Reading from the N-terminus, the 424-residue chain is Histidine--tRNA ligase (424 aa).

Belongs to the class-II aminoacyl-tRNA synthetase family. As to quaternary structure, homodimer.

Its subcellular location is the cytoplasm. It catalyses the reaction tRNA(His) + L-histidine + ATP = L-histidyl-tRNA(His) + AMP + diphosphate + H(+). This chain is Histidine--tRNA ligase, found in Shewanella denitrificans (strain OS217 / ATCC BAA-1090 / DSM 15013).